The chain runs to 177 residues: Endoribonuclease YbeY (177 aa).

3 residues coordinate Zn(2+): H118, H122, and H128.

This sequence belongs to the endoribonuclease YbeY family. Zn(2+) is required as a cofactor.

The protein resides in the cytoplasm. Single strand-specific metallo-endoribonuclease involved in late-stage 70S ribosome quality control and in maturation of the 3' terminus of the 16S rRNA. In Mycolicibacterium paratuberculosis (strain ATCC BAA-968 / K-10) (Mycobacterium paratuberculosis), this protein is Endoribonuclease YbeY.